The sequence spans 144 residues: Large ribosomal subunit protein uL15 (144 aa).

A disordered region spans residues 1–54 (MRLNTLSPAAGSKHAPKRVGRGMGSGLGKTAGRGHKGQKSRSGGGVRPGFEGGQ). 2 stretches are compositionally biased toward gly residues: residues 21 to 31 (RGMGSGLGKTA) and 42 to 52 (SGGGVRPGFEG).

Belongs to the universal ribosomal protein uL15 family. In terms of assembly, part of the 50S ribosomal subunit.

Its function is as follows. Binds to the 23S rRNA. The protein is Large ribosomal subunit protein uL15 of Shewanella baltica (strain OS223).